A 265-amino-acid polypeptide reads, in one-letter code: Apolipoprotein A-I (265 aa).

A signal peptide spans 1 to 18 (MKAVLLTLAVLFLTGSQA). Tandem repeats lie at residues 67–88 (LKLLDNWDSLTSTFAKVREQLG) and 89–110 (PVTQEFWDNLEKETESLRQEMN). A 10 X approximate tandem repeats region spans residues 67–265 (LKLLDNWDSL…DEASKKLNAQ (199 aa)). Methionine 109 bears the Methionine sulfoxide mark. Residues 111 to 121 (KDLEEVKQKVQ) form a 3; half-length repeat. Repeat copies occupy residues 122–142 (PYLDEFQKKWQEELQIYRQKV), 144–165 (PLGEELREGARQKVQELQDKLT), 166–187 (PLAEEMRDRARSHVETLRQQLA), 188–209 (PYSDDLRQRMAARFEMLKAGGG), and 210–230 (SLAEYHAKASEQLRALGEKAK). The stretch at 231–241 (PALEDLRQGLV) is one 9; half-length repeat. Copy 10 of the repeat occupies 242-265 (PVLESLKVSILAAIDEASKKLNAQ).

Belongs to the apolipoprotein A1/A4/E family. In terms of assembly, homodimer. Interacts with APOA1BP and CLU. Component of a sperm activating protein complex (SPAP), consisting of APOA1, an immunoglobulin heavy chain, an immunoglobulin light chain and albumin. Interacts with NDRG1. Interacts with SCGB3A2. Interacts with NAXE and YJEFN3. Glycosylated. Post-translationally, palmitoylated. In terms of processing, phosphorylation sites are present in the extracellular medium. As to expression, major protein of plasma HDL, also found in chylomicrons.

The protein localises to the secreted. In terms of biological role, participates in the reverse transport of cholesterol from tissues to the liver for excretion by promoting cholesterol efflux from tissues and by acting as a cofactor for the lecithin cholesterol acyltransferase (LCAT). As part of the SPAP complex, activates spermatozoa motility. The sequence is that of Apolipoprotein A-I (APOA1) from Tursiops truncatus (Atlantic bottle-nosed dolphin).